The following is a 231-amino-acid chain: Ribosomal RNA small subunit methyltransferase G (231 aa).

S-adenosyl-L-methionine contacts are provided by residues G92, L97, V143–E144, and R162.

This sequence belongs to the methyltransferase superfamily. RNA methyltransferase RsmG family.

Its subcellular location is the cytoplasm. It carries out the reaction guanosine(527) in 16S rRNA + S-adenosyl-L-methionine = N(7)-methylguanosine(527) in 16S rRNA + S-adenosyl-L-homocysteine. Functionally, specifically methylates the N7 position of guanine in position 527 of 16S rRNA. This is Ribosomal RNA small subunit methyltransferase G from Burkholderia thailandensis (strain ATCC 700388 / DSM 13276 / CCUG 48851 / CIP 106301 / E264).